We begin with the raw amino-acid sequence, 645 residues long: 1,4-alpha-glucan branching enzyme GlgB (645 aa).

The active-site Nucleophile is Asp309. Catalysis depends on Glu352, which acts as the Proton donor. The segment at 621 to 645 (MRKGSKKQDGKKAELRSNATSRRKR) is disordered. Basic and acidic residues predominate over residues 626 to 635 (KKQDGKKAEL).

The protein belongs to the glycosyl hydrolase 13 family. GlgB subfamily. As to quaternary structure, monomer.

It catalyses the reaction Transfers a segment of a (1-&gt;4)-alpha-D-glucan chain to a primary hydroxy group in a similar glucan chain.. It functions in the pathway glycan biosynthesis; glycogen biosynthesis. In terms of biological role, catalyzes the formation of the alpha-1,6-glucosidic linkages in glycogen by scission of a 1,4-alpha-linked oligosaccharide from growing alpha-1,4-glucan chains and the subsequent attachment of the oligosaccharide to the alpha-1,6 position. The chain is 1,4-alpha-glucan branching enzyme GlgB from Bacillus cytotoxicus (strain DSM 22905 / CIP 110041 / 391-98 / NVH 391-98).